The chain runs to 226 residues: ATP-dependent dethiobiotin synthetase BioD (226 aa).

Thr-19 is a binding site for Mg(2+). Residue Lys-40 is part of the active site. Residues Asp-53 and Glu-114 each contribute to the Mg(2+) site. ATP-binding positions include Asp-53, 114 to 117 (EGAG), and 174 to 175 (NR).

It belongs to the dethiobiotin synthetase family. In terms of assembly, homodimer. Mg(2+) serves as cofactor.

Its subcellular location is the cytoplasm. The catalysed reaction is (7R,8S)-7,8-diammoniononanoate + CO2 + ATP = (4R,5S)-dethiobiotin + ADP + phosphate + 3 H(+). The protein operates within cofactor biosynthesis; biotin biosynthesis; biotin from 7,8-diaminononanoate: step 1/2. Catalyzes a mechanistically unusual reaction, the ATP-dependent insertion of CO2 between the N7 and N8 nitrogen atoms of 7,8-diaminopelargonic acid (DAPA, also called 7,8-diammoniononanoate) to form a ureido ring. The chain is ATP-dependent dethiobiotin synthetase BioD from Nitrosospira multiformis (strain ATCC 25196 / NCIMB 11849 / C 71).